The chain runs to 426 residues: Probable glucose-6-phosphate isomerase (426 aa).

The active-site Proton donor is E272. Catalysis depends on residues H293 and K404.

Belongs to the GPI family.

Its subcellular location is the cytoplasm. The enzyme catalyses alpha-D-glucose 6-phosphate = beta-D-fructose 6-phosphate. It functions in the pathway carbohydrate biosynthesis; gluconeogenesis. The protein operates within carbohydrate degradation; glycolysis; D-glyceraldehyde 3-phosphate and glycerone phosphate from D-glucose: step 2/4. In terms of biological role, catalyzes the reversible isomerization of glucose-6-phosphate to fructose-6-phosphate. In Halobacterium salinarum (strain ATCC 700922 / JCM 11081 / NRC-1) (Halobacterium halobium), this protein is Probable glucose-6-phosphate isomerase.